A 126-amino-acid chain; its full sequence is Small ribosomal subunit protein uS11 (126 aa).

Belongs to the universal ribosomal protein uS11 family. Part of the 30S ribosomal subunit. Interacts with proteins S7 and S18. Binds to IF-3.

Located on the platform of the 30S subunit, it bridges several disparate RNA helices of the 16S rRNA. Forms part of the Shine-Dalgarno cleft in the 70S ribosome. In Ehrlichia chaffeensis (strain ATCC CRL-10679 / Arkansas), this protein is Small ribosomal subunit protein uS11.